The chain runs to 501 residues: Mitogen-activated protein kinase MKC1 (501 aa).

The 312-residue stretch at 28-339 (FKIVKELGHG…VRDALNHKYL (312 aa)) folds into the Protein kinase domain. ATP-binding positions include 34–42 (LGHGAYGIV) and K74. The active-site Proton acceptor is the D174. T211 is subject to Phosphothreonine. Residues 211–213 (TEY) carry the TXY motif. Position 213 is a phosphotyrosine (Y213). The disordered stretch occupies residues 400-450 (MQKREEQRQEEEEKELLEQQRQFPAQESMDISQTPYNNLETNIGTPQVEDD). The segment covering 422–444 (FPAQESMDISQTPYNNLETNIGT) has biased composition (polar residues).

It belongs to the protein kinase superfamily. CMGC Ser/Thr protein kinase family. MAP kinase subfamily. The cofactor is Mg(2+). In terms of processing, dually phosphorylated on Thr-211 and Tyr-213, which activates the enzyme.

It catalyses the reaction L-seryl-[protein] + ATP = O-phospho-L-seryl-[protein] + ADP + H(+). The enzyme catalyses L-threonyl-[protein] + ATP = O-phospho-L-threonyl-[protein] + ADP + H(+). Its activity is regulated as follows. Activated by tyrosine and threonine phosphorylation. The protein is Mitogen-activated protein kinase MKC1 (MKC1) of Candida albicans (Yeast).